The primary structure comprises 231 residues: Biosynthetic peptidoglycan transglycosylase (231 aa).

The helical transmembrane segment at 10–30 threads the bilayer; it reads LLLLGLIGLFLVWQLWLLGWV.

Belongs to the glycosyltransferase 51 family.

It localises to the cell inner membrane. It catalyses the reaction [GlcNAc-(1-&gt;4)-Mur2Ac(oyl-L-Ala-gamma-D-Glu-L-Lys-D-Ala-D-Ala)](n)-di-trans,octa-cis-undecaprenyl diphosphate + beta-D-GlcNAc-(1-&gt;4)-Mur2Ac(oyl-L-Ala-gamma-D-Glu-L-Lys-D-Ala-D-Ala)-di-trans,octa-cis-undecaprenyl diphosphate = [GlcNAc-(1-&gt;4)-Mur2Ac(oyl-L-Ala-gamma-D-Glu-L-Lys-D-Ala-D-Ala)](n+1)-di-trans,octa-cis-undecaprenyl diphosphate + di-trans,octa-cis-undecaprenyl diphosphate + H(+). It participates in cell wall biogenesis; peptidoglycan biosynthesis. In terms of biological role, peptidoglycan polymerase that catalyzes glycan chain elongation from lipid-linked precursors. The protein is Biosynthetic peptidoglycan transglycosylase of Dechloromonas aromatica (strain RCB).